Here is a 155-residue protein sequence, read N- to C-terminus: Ribosomal RNA large subunit methyltransferase H (155 aa).

S-adenosyl-L-methionine contacts are provided by residues L72, G103, and 122-127; that span reads FGRMVW.

It belongs to the RNA methyltransferase RlmH family. In terms of assembly, homodimer.

It is found in the cytoplasm. The catalysed reaction is pseudouridine(1915) in 23S rRNA + S-adenosyl-L-methionine = N(3)-methylpseudouridine(1915) in 23S rRNA + S-adenosyl-L-homocysteine + H(+). Its function is as follows. Specifically methylates the pseudouridine at position 1915 (m3Psi1915) in 23S rRNA. The protein is Ribosomal RNA large subunit methyltransferase H of Paracoccus denitrificans (strain Pd 1222).